A 146-amino-acid chain; its full sequence is Hemoglobin subunit beta-2 (146 aa).

In terms of domain architecture, Globin spans 2 to 146 (GLTAHEKQLI…IADALGKGYH (145 aa)). His-63 and His-92 together coordinate heme b.

It belongs to the globin family. Heterotetramer of two alpha chains and two beta chains. Red blood cells.

In terms of biological role, involved in oxygen transport from the lung to the various peripheral tissues. In Xenopus borealis (Kenyan clawed frog), this protein is Hemoglobin subunit beta-2 (hbb2).